We begin with the raw amino-acid sequence, 340 residues long: Cell division protein FtsQ (340 aa).

The interval 1-41 is disordered; it reads MQGLNPFHRDQGAGGRPAPVRPAPARPAPVAPRTPRKDPAP. Residues 1-55 lie on the Cytoplasmic side of the membrane; the sequence is MQGLNPFHRDQGAGGRPAPVRPAPARPAPVAPRTPRKDPAPSRLAYRLNRMMLRP. A compositionally biased stretch (pro residues) spans 19–32; that stretch reads PVRPAPARPAPVAP. Residues 56-78 form a helical membrane-spanning segment; that stretch reads LVRRLVHVGLPAFLAALVAGIWL. Residues 79-340 lie on the Periplasmic side of the membrane; that stretch reads SDDTRRANLT…NAAKAKKKSG (262 aa). The POTRA domain occupies 104 to 172; it reads FMVKMMTIEG…GVLSAVVTER (69 aa). Residues 308–340 form a disordered region; it reads RQARGQPELGPDGTPLAPEATAGNAAKAKKKSG. Low complexity predominate over residues 324–333; that stretch reads APEATAGNAA.

Belongs to the FtsQ/DivIB family. FtsQ subfamily.

Its subcellular location is the cell inner membrane. Essential cell division protein. This chain is Cell division protein FtsQ, found in Paracoccus denitrificans (strain Pd 1222).